The chain runs to 93 residues: Cell division topological specificity factor (93 aa).

The protein belongs to the MinE family.

Functionally, prevents the cell division inhibition by proteins MinC and MinD at internal division sites while permitting inhibition at polar sites. This ensures cell division at the proper site by restricting the formation of a division septum at the midpoint of the long axis of the cell. In Methylococcus capsulatus (strain ATCC 33009 / NCIMB 11132 / Bath), this protein is Cell division topological specificity factor.